Reading from the N-terminus, the 317-residue chain is Tumor-associated calcium signal transducer 2 (317 aa).

The signal sequence occupies residues 1-24 (MARGLDLAPLLLLLLAMVAGFCTA). Topologically, residues 25-270 (QINCTCPTNK…QFSMKRLTTG (246 aa)) are extracellular. N27 carries an N-linked (GlcNAc...) asparagine glycan. Residues 64 to 139 (TSKCLLLKAR…TDKGDQSLRC (76 aa)) form the Thyroglobulin type-1 domain. 3 disulfides stabilise this stretch: C67–C102, C113–C119, and C121–C139. N114 carries N-linked (GlcNAc...) asparagine glycosylation. 2 N-linked (GlcNAc...) asparagine glycosylation sites follow: N162 and N202. The chain crosses the membrane as a helical span at residues 271 to 291 (LIAVIAVVAVALVAGVVVLVV). Topologically, residues 292-317 (TNRRKSGKYKKVELKELGEMRSEPSL) are cytoplasmic.

The protein belongs to the EPCAM family.

It localises to the membrane. Its function is as follows. May function as a growth factor receptor. In Rattus norvegicus (Rat), this protein is Tumor-associated calcium signal transducer 2 (Tacstd2).